Reading from the N-terminus, the 658-residue chain is UvrABC system protein B (658 aa).

The 388-residue stretch at 26–413 (EGINSGKKKQ…SPEVIEQIIR (388 aa)) folds into the Helicase ATP-binding domain. 39–46 (GATGTGKT) contacts ATP. The Beta-hairpin motif lies at 92–115 (YYDYYQPEAYVPQTDTFIEKDAQI). The region spanning 430–596 (QIDDLLGEIQ…TIQKGVRDVI (167 aa)) is the Helicase C-terminal domain. The region spanning 622–657 (EKTIAKMEAEMKEAAKALDFERAAELRDLLLELKAE) is the UVR domain.

The protein belongs to the UvrB family. Forms a heterotetramer with UvrA during the search for lesions. Interacts with UvrC in an incision complex.

It localises to the cytoplasm. Its function is as follows. The UvrABC repair system catalyzes the recognition and processing of DNA lesions. A damage recognition complex composed of 2 UvrA and 2 UvrB subunits scans DNA for abnormalities. Upon binding of the UvrA(2)B(2) complex to a putative damaged site, the DNA wraps around one UvrB monomer. DNA wrap is dependent on ATP binding by UvrB and probably causes local melting of the DNA helix, facilitating insertion of UvrB beta-hairpin between the DNA strands. Then UvrB probes one DNA strand for the presence of a lesion. If a lesion is found the UvrA subunits dissociate and the UvrB-DNA preincision complex is formed. This complex is subsequently bound by UvrC and the second UvrB is released. If no lesion is found, the DNA wraps around the other UvrB subunit that will check the other stand for damage. The protein is UvrABC system protein B of Bacillus anthracis.